Reading from the N-terminus, the 372-residue chain is MNPGIDLQGTFIETVQSLGIPAGAAKALWMPLPMLIMLLAATVSVLVVVWLERKISAAAQQRIGPEFIGPLGVLAPLADGLKLVLKEDVVPAKADKLLFTLGPAIVVIPVFLSYLILPFGQNLQITDVGLGIFLWIALSSVVPIGLLMSGYASNNKYSLLGGLRAAAQSISYELPLALSVLAVVMMSNSLSTVDIVNQQAGYGILGWNIWRQPVGFIIFWIAALAECERIPFDLPEAEEELVAGYQTEYSGMKFALFYLGSYVNLTLSALLFAVLYLGGWEFPISLSVISGLIGVPESTPWLQLIFATIGIGMTLLKAYFLIFLAILMRWTVPRVRIDQLLDLGWKFLLPVSLVNLLITAGLKLAFPVAFGG.

The next 8 membrane-spanning stretches (helical) occupy residues 31-51, 65-85, 97-117, 128-148, 176-196, 254-276, 304-324, and 347-367; these read PLPMLIMLLAATVSVLVVVWL, PEFIGPLGVLAPLADGLKLVL, LLFTLGPAIVVIPVFLSYLIL, VGLGIFLWIALSSVVPIGLLM, LALSVLAVVMMSNSLSTVDIV, FALFYLGSYVNLTLSALLFAVLY, LIFATIGIGMTLLKAYFLIFL, and FLLPVSLVNLLITAGLKLAFP.

It belongs to the complex I subunit 1 family. As to quaternary structure, NDH-1 is composed of at least 11 different subunits.

Its subcellular location is the cellular thylakoid membrane. It catalyses the reaction a plastoquinone + NADH + (n+1) H(+)(in) = a plastoquinol + NAD(+) + n H(+)(out). The catalysed reaction is a plastoquinone + NADPH + (n+1) H(+)(in) = a plastoquinol + NADP(+) + n H(+)(out). In terms of biological role, NDH-1 shuttles electrons from an unknown electron donor, via FMN and iron-sulfur (Fe-S) centers, to quinones in the respiratory and/or the photosynthetic chain. The immediate electron acceptor for the enzyme in this species is believed to be plastoquinone. Couples the redox reaction to proton translocation, and thus conserves the redox energy in a proton gradient. The sequence is that of NAD(P)H-quinone oxidoreductase subunit 1 from Leptolyngbya boryana (Plectonema boryanum).